Consider the following 606-residue polypeptide: Aspartate--tRNA(Asp/Asn) ligase (606 aa).

Glu172 provides a ligand contact to L-aspartate. The aspartate stretch occupies residues 196–199; it reads QLFK. Arg218 serves as a coordination point for L-aspartate. ATP contacts are provided by residues 218–220 and Gln227; that span reads RDE. His448 is a binding site for L-aspartate. Glu482 is a binding site for ATP. Residue Arg489 participates in L-aspartate binding. 534 to 537 lines the ATP pocket; the sequence is GWDR.

Belongs to the class-II aminoacyl-tRNA synthetase family. Type 1 subfamily. As to quaternary structure, homodimer.

It is found in the cytoplasm. It carries out the reaction tRNA(Asx) + L-aspartate + ATP = L-aspartyl-tRNA(Asx) + AMP + diphosphate. Aspartyl-tRNA synthetase with relaxed tRNA specificity since it is able to aspartylate not only its cognate tRNA(Asp) but also tRNA(Asn). Reaction proceeds in two steps: L-aspartate is first activated by ATP to form Asp-AMP and then transferred to the acceptor end of tRNA(Asp/Asn). The sequence is that of Aspartate--tRNA(Asp/Asn) ligase from Saccharopolyspora erythraea (strain ATCC 11635 / DSM 40517 / JCM 4748 / NBRC 13426 / NCIMB 8594 / NRRL 2338).